Consider the following 2548-residue polypeptide: MNINDGGRRRFEDNEHTLRIYPGAISEGTIYCPIPARKNSTAAEVIESLINKLHLDKTKCYVLAEVKEFGGEEWILNPTDCPVQRMMLWPRMALENRLSGEDYRFLLREKNLDGSIHYGSLQSWLRVTEERRRMMERGFLPQPQQKDFDDLCSLPDLNEKTLLENLRNRFKHEKIYTYVGSILIVINPFKFLPIYNPKYVKMYDNHQLGKLEPHIYAVADVAYHAMLQRKKNQCIVISGESGSGKTQSTNFLIHHLTALSQKGFASGVEQIILGAGPVLEAFGNAKTAHNNNSSRFGKFIQVNYQETGTVLGAYVEKYLLEKSRLVYQEHNERNYHVFYYLLAGASEDERSAFHLKQPEEYHYLNQITKKPLRQSWDDYCYDSEPDCFTVEGEDLRHDFERLQLAMEMVGFLPKTRRQIFSLLSAILHLGNICYKKKTYRDDSIDICNPEVLPIVSELLEVKEEMLFEALVTRKTVTVGEKLILPYKLAEAVTVRNSMAKSLYSALFDWIVFRINHALLNSKDLEHNTKTLSIGVLDIFGFEDYENNSFEQFCINFANERLQHYFNQHIFKLEQEEYRTEGISWHNIDYIDNTCCINLISKKPTGLLHLLDEESNFPQATNQTLLDKFKHQHEDNSYIEFPAVMEPAFIIKHYAGKVKYGVKDFREKNTDHMRPDIVALLRSSKNAFISGMIGIDPVAVFRWAILRAFFRAMVAFREAGKRNIHRKTGHDDTAPCAILKSMDSFSFLQHPVHQRSLEILQRCKEEKYSITRKNPRTPLSDLQGMNALNEKNQHDTFDIAWNGRTGIRQSRLSSGTSLLDKDGIFANSTSSKLLERAHGILTRNKNFKSKPALPKHLLEVNSLKHLTRLTLQDRITKSLLHLHKKKKPPSISAQFQASLSKLMETLGQAEPYFVKCIRSNAEKLPLRFSDVLVLRQLRYTGMLETVRIRQSGYSSKYSFQDFVSHFHVLLPRNIIPSKFNIQDFFRKINLNPDNYQVGKTMVFLKEQERQHLQDLLHQEVLRRIILLQRWFRVLLCRQHFLHLRQASVIIQRFWRNYLNQKQVRDAAVQKDAFVMASAAALLQASWRAHLERQRYLELRAAAIVIQQKWRDYYRRRHMAAICIQARWKAYRESKRYQEQRKKIILLQSTCRGFRARQRFKALKEQRLRETKPEVGLVNIKGYGSLEIQGSDPSGWEDCSFDNRIKAIEECKSVIESNRISRESSVDCLKESPNKQQERAQSQSGVDLQEDVLVRERPRSLEDLHQKKVGRAKRESRRMRELEQAIFSLELLKVRSLGGISPSEDRRWSTELVPEGLQSPRGTPDSESSQGSLELLSYEESQKSKLESVISDEGDLQFPSPKISSSPKFDSRDNALSASNETSSAEHLKDGTMKEMVVCSSESITCKPQLKDSFISNSLPTFFYIPQQDPLKTNSQLDTSIQRNKLLENEDTAGEALTLDINRETRRYHCSGKDQIVPSLNTESSNPVLKKLEKLNTEKEERQKQLQQQNEKEMMEQIRQQTDILEKERKAFKTIEKPRIGECLVAPSSYQSKQRVERPSSLLSLNTSNKGELNVLGSLSLKDAALAQKDSSSAHLPPKDRPVTVFFERKGSPCQSSTVKELSKTDRMGTQLNVACKLSNNRISKREHFRPTQSYSHNSDDLSREGNARPIFFTPKDNMSIPLVSKEALNSKNPQLHKEDEPAWKPVKLAGPGQRETSQRFSSVDEQAKLHKTMSQGEITKLAVRQKASDSDIRPQRAKMRFWAKGKQGEKKTTRVKPTTQSEVSPLFAGTDVIPAHQFPDELAAYHPTPPLSPELPGSCRKEFKENKEPSPKAKRKRSVKISNVALDSMHWQNDSVQIIASVSDLKSMDEFLLKKVNDLDNEDSKKDTLVDVVFKKALKEFRQNIFSFYSSALAMDDGKSIRYKDLYALFEQILEKTMRLEQRDSLGESPVRVWVNTFKVFLDEYMNEFKTSDCTATKVPKTERKKRRKKETDLVEEHNGHIFKATQYSIPTYCEYCSSLIWIMDRASVCKLCKYACHKKCCLKTTAKCSKKYDPELSSRQFGVELSRLTSEDRTVPLVVEKLINYIEMHGLYTEGIYRKSGSTNKIKELRQGLDTDAESVNLDDYNIHVIASVFKQWLRDLPNPLMTFELYEEFLRAMGLQERKETIRGVYSVIDQLSRTHLNTLERLIFHLVRIALQEDTNRMSANALAIVFAPCILRCPDTTDPLQSVQDISKTTTCVELIVVEQMNKYKARLKDISSLEFAENKAKTRLSLIRRSMGKGRIRRGNYPGPSSPVVVRLPSVSDVSEETLTSEAAMETDITEQQQAAMQQEERVLTEQIENLQKEKEELTFEMLVLEPRASDDETLESEASIGTADSSENLNMESEYAISEKSERSLALSSLKTAGKSEPSSKLRKQLKKQQDSLDVVDSSVSSLCLSNTASSHGTRKLFQIYSKSPFYRAASGNEALGMEGPLGQTKFLEDKPQFISRGTFNPEKGKQKLKNVKNSPQKTKETPEGTVMSGRRKTVDPDCTSNQQLALFGNNEFMV.

In terms of domain architecture, Ras-associating spans 14–112; that stretch reads NEHTLRIYPG…YRFLLREKNL (99 aa). The Myosin motor domain maps to 146–1016; it reads KDFDDLCSLP…ERQHLQDLLH (871 aa). A helical membrane pass occupies residues 175–195; that stretch reads IYTYVGSILIVINPFKFLPIY. 239-246 is a binding site for ATP; sequence GESGSGKT. Serine 755 carries the post-translational modification Phosphoserine. Positions 898-920 are actin-binding; the sequence is LSKLMETLGQAEPYFVKCIRSNA. IQ domains follow at residues 1021–1041, 1042–1071, 1074–1103, 1115–1144, and 1138–1167; these read RRIILLQRWFRVLLCRQHFLH, LRQASVIIQRFWRNYLNQKQVRDAAVQKDA, MASAAALLQASWRAHLERQRYLELRAAAIV, RHMAAICIQARWKAYRESKRYQEQRKKIIL, and QRKKIILLQSTCRGFRARQRFKALKEQRLR. A neck or regulatory domain region spans residues 1021–1162; it reads RRIILLQRWF…RARQRFKALK (142 aa). Residues 1163–2511 form a tail region; it reads EQRLRETKPE…LKNVKNSPQK (1349 aa). Positions 1223–1236 are enriched in basic and acidic residues; that stretch reads SVDCLKESPNKQQE. The disordered stretch occupies residues 1223-1250; it reads SVDCLKESPNKQQERAQSQSGVDLQEDV. A phosphoserine mark is found at serine 1242 and serine 1258. A coiled-coil region spans residues 1264-1291; sequence QKKVGRAKRESRRMRELEQAIFSLELLK. Phosphoserine occurs at positions 1299 and 1317. Positions 1299-1386 are disordered; sequence SPSEDRRWST…SNETSSAEHL (88 aa). Composition is skewed to low complexity over residues 1324-1337 and 1356-1366; these read SESSQGSLELLSYE and FPSPKISSSPK. Serine 1364 is modified (phosphoserine). Residues 1372–1381 are compositionally biased toward polar residues; it reads NALSASNETS. A coiled-coil region spans residues 1486–1532; it reads VLKKLEKLNTEKEERQKQLQQQNEKEMMEQIRQQTDILEKERKAFKT. Residues 1804–1836 are disordered; it reads YHPTPPLSPELPGSCRKEFKENKEPSPKAKRKR. Residues 1818 to 1830 show a composition bias toward basic and acidic residues; the sequence is CRKEFKENKEPSP. Serine 1948 carries the post-translational modification Phosphoserine. 2 consecutive Phorbol-ester/DAG-type zinc fingers follow at residues 1999–2048 and 2068–2119; these read GHIF…TAKC and LTSE…DAES. The Rho-GAP domain occupies 2063–2251; that stretch reads VELSRLTSED…LIVVEQMNKY (189 aa). Serine 2294 is modified (phosphoserine). The stretch at 2315 to 2358 forms a coiled coil; sequence AAMETDITEQQQAAMQQEERVLTEQIENLQKEKEELTFEMLVLE. Disordered regions lie at residues 2359 to 2383 and 2401 to 2424; these read PRASDDETLESEASIGTADSSENLN and SSLKTAGKSEPSSKLRKQLKKQQD. Serine 2464 is modified (phosphoserine). The segment at 2490 to 2531 is disordered; it reads RGTFNPEKGKQKLKNVKNSPQKTKETPEGTVMSGRRKTVDPD.

It belongs to the TRAFAC class myosin-kinesin ATPase superfamily. Myosin family. Phosphorylated by ALPK1 following monosodium urate monohydrate (MSU)-induced inflammation. In terms of tissue distribution, found to be expressed in testis and placenta and at lower levels in all the examined tissues with the exception of liver. Isoform 5: Found in leukocytes but not in brain, retina or testis.

It localises to the membrane. Its subcellular location is the cytoplasm. The protein localises to the synapse. The protein resides in the cell projection. It is found in the growth cone. Its function is as follows. Myosins are actin-based motor molecules with ATPase activity. Unconventional myosins serve in intracellular movements. Regulates Rho by stimulating it's GTPase activity in neurons. Required for the regulation of neurite branching and motor neuron axon guidance. This chain is Unconventional myosin-IXa (MYO9A), found in Homo sapiens (Human).